A 607-amino-acid chain; its full sequence is ATP-dependent zinc metalloprotease FtsH 2 (607 aa).

Over 1-2 (MR) the chain is Cytoplasmic. The chain crosses the membrane as a helical span at residues 3 to 23 (SLWIVLVLVLGSALLLQVMAA). At 24–99 (SDDRIPYARF…PYTRVADELG (76 aa)) the chain is on the periplasmic side. Residues 100-120 (LPPYLWLLLPLAGLAAMGHLA) form a helical membrane-spanning segment. Residues 121-607 (SRRATTAGTI…LREMVASGEA (487 aa)) are Cytoplasmic-facing. Position 195-202 (195-202 (GPPGTGKT)) interacts with ATP. His418 provides a ligand contact to Zn(2+). The active site involves Glu419. Zn(2+) contacts are provided by His422 and Asp495.

It in the central section; belongs to the AAA ATPase family. The protein in the C-terminal section; belongs to the peptidase M41 family. As to quaternary structure, homohexamer. It depends on Zn(2+) as a cofactor.

It is found in the cell inner membrane. Its function is as follows. Acts as a processive, ATP-dependent zinc metallopeptidase for both cytoplasmic and membrane proteins. Plays a role in the quality control of integral membrane proteins. This chain is ATP-dependent zinc metalloprotease FtsH 2, found in Sorangium cellulosum (strain So ce56) (Polyangium cellulosum (strain So ce56)).